The primary structure comprises 428 residues: MKLLIKNGHVLDVKTGLDRVTDILAVDGIIHEVGSKIDEAGCEVIDATGLYVTPGLVDAHCHLRDPGYEYKEDIESGTRSAAKGGFTSVACMPNTNPVLDNEAMVKYVINKAKTDGFLNVFPIGALSKGLKGEELSEIGELKFAGAVALSDDGRPVGNSSLMKKAMQYASMFDITIISHCEDLDLVDEGLMNEGYQSSILGLKGNPAPAEEVMIARDLILAEYTKATIHIAHVSTELGVDLIRNAKRRGVKVTAETCPHYFTLTDNACEGFNTNAKVNPPLRTQKDVDAIIQGLKDGTIDIISTDHAPHHIDEKNVEFKIAANGMVGFETAFPLAVTYLVKPGHLSLKELVYKMSFNPSQMLGLNKGTIEVGKLADLIIFDLNEEYKVNITEFESKSKNSPFNGLLLYGQPQYTIVGGTPVVRKKVLL.

Zn(2+) contacts are provided by His60 and His62. Residues 62–64 (HLR) and Asn94 contribute to the substrate site. Zn(2+) is bound by residues Asp152, His179, and His232. Asn278 lines the substrate pocket. Asp305 contributes to the Zn(2+) binding site. The active site involves Asp305. His309 is a substrate binding site.

This sequence belongs to the metallo-dependent hydrolases superfamily. DHOase family. Class I DHOase subfamily. It depends on Zn(2+) as a cofactor.

The enzyme catalyses (S)-dihydroorotate + H2O = N-carbamoyl-L-aspartate + H(+). Its pathway is pyrimidine metabolism; UMP biosynthesis via de novo pathway; (S)-dihydroorotate from bicarbonate: step 3/3. Catalyzes the reversible cyclization of carbamoyl aspartate to dihydroorotate. The chain is Dihydroorotase from Ruminiclostridium cellulolyticum (strain ATCC 35319 / DSM 5812 / JCM 6584 / H10) (Clostridium cellulolyticum).